The following is a 669-amino-acid chain: Exostosin-like 1 (669 aa).

Topologically, residues 1-8 are cytoplasmic; it reads MLWRRKSF. The chain crosses the membrane as a helical; Signal-anchor for type II membrane protein span at residues 9–29; it reads WLALSAFWLLLVLLGVFPLRL. The Lumenal portion of the chain corresponds to 30–669; it reads AVLPGPLPGR…RKKYRSLEKP (640 aa). 2 N-linked (GlcNAc...) asparagine glycosylation sites follow: N263 and N480. A disulfide bridge connects residues C577 and C627. Positions 601-621 are disordered; sequence RQHPEAVPMDSGDPRPVPEPQ.

Belongs to the glycosyltransferase 47 family.

Its subcellular location is the endoplasmic reticulum membrane. It catalyses the reaction 3-O-{[(1-&gt;4)-beta-D-GlcA-(1-&gt;4)-alpha-D-GlcNAc](n)-(1-&gt;4)-beta-D-GlcA-(1-&gt;3)-beta-D-Gal-(1-&gt;3)-beta-D-Gal-(1-&gt;4)-beta-D-Xyl}-L-seryl-[protein] + UDP-N-acetyl-alpha-D-glucosamine = 3-O-{alpha-D-GlcNAc-[(1-&gt;4)-beta-D-GlcA-(1-&gt;4)-alpha-D-GlcNAc](n)-(1-&gt;4)-beta-D-GlcA-(1-&gt;3)-beta-D-Gal-(1-&gt;3)-beta-D-Gal-(1-&gt;4)-beta-D-Xyl}-L-seryl-[protein] + UDP + H(+). It participates in protein modification; protein glycosylation. Glycosyltransferase required for the biosynthesis of heparan-sulfate (HS). Transfers N-acetyl-alpha-D-glucosamine to the nascent HS chain (GlcNAcT-II activity). Appears to lack GlcNAcT I and GlcAT-II activities. The polypeptide is Exostosin-like 1 (Extl1) (Mus musculus (Mouse)).